The following is a 189-amino-acid chain: Interferon alpha-6 (189 aa).

Positions 1–23 are cleaved as a signal peptide; the sequence is MARLCAFLMVLAVLSYWPTCSLG. 2 disulfides stabilise this stretch: cysteine 24–cysteine 122 and cysteine 52–cysteine 162. A glycan (N-linked (GlcNAc...) asparagine) is linked at asparagine 101.

This sequence belongs to the alpha/beta interferon family.

The protein localises to the secreted. In terms of biological role, produced by macrophages, IFN-alpha have antiviral activities. Interferon stimulates the production of two enzymes: a protein kinase and an oligoadenylate synthetase. This Mus musculus (Mouse) protein is Interferon alpha-6 (Ifna6).